Consider the following 511-residue polypeptide: Maturase K (511 aa).

It belongs to the intron maturase 2 family. MatK subfamily.

The protein resides in the plastid. It localises to the chloroplast. Functionally, usually encoded in the trnK tRNA gene intron. Probably assists in splicing its own and other chloroplast group II introns. The sequence is that of Maturase K from Avena sativa (Oat).